A 253-amino-acid chain; its full sequence is HTH-type transcriptional regulator YdeO (253 aa).

The HTH araC/xylS-type domain maps to 137 to 233 (GKVRNIVNMK…GNSPKRVSKE (97 aa)). 2 DNA-binding regions (H-T-H motif) span residues 154-175 (KDICDCLYISESLLKKKLKQEQ) and 200-223 (VNKIAEQCGYASTSYFIYAFRKHF).

In terms of biological role, induces the expression of gadE. Could also regulate the expression of other genes involved in acid resistance. The sequence is that of HTH-type transcriptional regulator YdeO (ydeO) from Shigella flexneri.